A 164-amino-acid polypeptide reads, in one-letter code: Large ribosomal subunit protein bL17 (164 aa).

The segment at 127-164 (RARTDSVPARKGAGKKDASRVSGTVPDGQSQKIGKKKE) is disordered.

The protein belongs to the bacterial ribosomal protein bL17 family. Part of the 50S ribosomal subunit. Contacts protein L32.

The protein is Large ribosomal subunit protein bL17 of Treponema pallidum (strain Nichols).